The primary structure comprises 326 residues: Type II methyltransferase M.CviAII (326 aa).

Belongs to the N(4)/N(6)-methyltransferase family.

It catalyses the reaction a 2'-deoxyadenosine in DNA + S-adenosyl-L-methionine = an N(6)-methyl-2'-deoxyadenosine in DNA + S-adenosyl-L-homocysteine + H(+). Functionally, an alpha subtype methylase that recognizes the double-stranded sequence 5'-CATG-3', methylates A-2 on both strands and protects the DNA from cleavage by the CviAII endonuclease. The sequence is that of Type II methyltransferase M.CviAII (CVIAIIM) from Paramecium bursaria Chlorella virus 1 (PBCV-1).